The following is a 212-amino-acid chain: Large ribosomal subunit protein uL3 (212 aa).

The interval 147-166 (GSTGQNQSPGKVFKGKKMPG) is disordered. N5-methylglutamine is present on Gln153.

Belongs to the universal ribosomal protein uL3 family. Part of the 50S ribosomal subunit. Forms a cluster with proteins L14 and L19. In terms of processing, methylated by PrmB.

Its function is as follows. One of the primary rRNA binding proteins, it binds directly near the 3'-end of the 23S rRNA, where it nucleates assembly of the 50S subunit. This is Large ribosomal subunit protein uL3 from Psychrobacter sp. (strain PRwf-1).